Here is a 273-residue protein sequence, read N- to C-terminus: SPRY domain-containing SOCS box protein 1 (273 aa).

Phosphotyrosine; by MET is present on tyrosine 31. The B30.2/SPRY domain occupies lysine 33 to aspartate 231. Residues proline 232–glutamine 273 enclose the SOCS box domain.

The protein belongs to the SPSB family. In terms of assembly, component of the probable ECS(SPSB1) E3 ubiquitin-protein ligase complex which contains CUL5, RNF7/RBX2, Elongin BC complex and SPSB1. Interacts with CUL5, RNF7, ELOB and ELOC. Directly interacts with MET tyrosine kinase domain in the presence and in the absence of HGF, however HGF treatment has a positive effect on this interaction. When phosphorylated, interacts with RASA1 without affecting its stability. Interacts (via B30.2/SPRY domain) with PAWR; this interaction is direct and occurs in association with the Elongin BC complex. Interacts with NOS2. Interacts with EPHB2.

It is found in the cytoplasm. The protein localises to the cytosol. The protein operates within protein modification; protein ubiquitination. Substrate recognition component of a SCF-like ECS (Elongin BC-CUL2/5-SOCS-box protein) E3 ubiquitin-protein ligase complex which mediates the ubiquitination and subsequent proteasomal degradation of target proteins. Negatively regulates nitric oxide (NO) production and limits cellular toxicity in activated macrophages by mediating the ubiquitination and proteasomal degradation of NOS2. Acts as a bridge which links NOS2 with the ECS E3 ubiquitin ligase complex components ELOC and CUL5. The polypeptide is SPRY domain-containing SOCS box protein 1 (SPSB1) (Homo sapiens (Human)).